Here is a 154-residue protein sequence, read N- to C-terminus: Deoxyuridine 5'-triphosphate nucleotidohydrolase (154 aa).

Substrate-binding positions include 64–66 (RSG), Asn-77, 81–83 (TID), and Lys-91.

This sequence belongs to the dUTPase family. Homotrimer. Requires Mg(2+) as cofactor.

It carries out the reaction dUTP + H2O = dUMP + diphosphate + H(+). The protein operates within pyrimidine metabolism; dUMP biosynthesis; dUMP from dCTP (dUTP route): step 2/2. Functionally, this enzyme is involved in nucleotide metabolism: it produces dUMP, the immediate precursor of thymidine nucleotides and it decreases the intracellular concentration of dUTP so that uracil cannot be incorporated into DNA. This Mycobacterium bovis (strain BCG / Pasteur 1173P2) protein is Deoxyuridine 5'-triphosphate nucleotidohydrolase.